We begin with the raw amino-acid sequence, 368 residues long: Somatostatin receptor type 5 (368 aa).

Residues 1–45 (MEPLFPASPLTTWNTSSVVPSGSGDENGTLAGLGPSPGARAVVVP) lie on the Extracellular side of the membrane. N-linked (GlcNAc...) asparagine glycosylation is found at Asn14 and Asn27. The helical transmembrane segment at 46–66 (VLYLLVCAVGLGGNTLVIYVV) threads the bilayer. At 67–77 (LRHAKMKTVTN) the chain is on the cytoplasmic side. The chain crosses the membrane as a helical span at residues 78–98 (IYILNLAVADVLLMLGLPFVA). The Extracellular segment spans residues 99–115 (TQNAISYWPFGPVLCRL). Cys113 and Cys188 are disulfide-bonded. The helical transmembrane segment at 116–136 (VMTLDGINQFTSIFCLTVMSV) threads the bilayer. At 137 to 158 (DRYLAVVHPIRSARWRRPRVAK) the chain is on the cytoplasmic side. The chain crosses the membrane as a helical span at residues 159 to 179 (LASAAVWAFSLVMSLPLVVFA). Residues 180 to 207 (DIQEGWNTCNLSWPEPVGLWGAVFIIYT) lie on the Extracellular side of the membrane. N-linked (GlcNAc...) asparagine glycosylation occurs at Asn189. The chain crosses the membrane as a helical span at residues 208–228 (SVLGFFGPLLVICLCYLLIVV). At 229-251 (KLKASGVRVGSTRRRSERKVTRM) the chain is on the cytoplasmic side. A helical membrane pass occupies residues 252 to 272 (VVVVVLVFAGCWLPFFIVNIV). The Extracellular portion of the chain corresponds to 273–286 (NLAFALPEEPASAG). The helical transmembrane segment at 287–309 (AYFFVVVLSYANSCANPLLYGFL) threads the bilayer. Topologically, residues 310-368 (SDNFRQSFRKVLCLRKGYGAGAEDADATEPQPGPSSRLQEAMMPVRSCKANGLMQTSKL) are cytoplasmic. Cys322 carries the S-palmitoyl cysteine; by ZDHHC5 lipid modification.

It belongs to the G-protein coupled receptor 1 family. As to quaternary structure, heterodimer with SSTR2. Heterodimerization with SSTR2 increases cell growth inhibition activity of SSTR2. In terms of processing, palmitoylated by ZDHHC5, but not ZDHHC3, nor ZDHHC8. Palmitoylation creates an additional intracellular loop which is thought to be important for efficient coupling to G-proteins and may target the protein to lipid rafts.

The protein resides in the cell membrane. Its function is as follows. Receptor for somatostatin 28 and to a lesser extent for somatostatin-14. The activity of this receptor is mediated by G proteins which inhibit adenylyl cyclase. Increases cell growth inhibition activity of SSTR2 following heterodimerization. The chain is Somatostatin receptor type 5 (SSTR5) from Bos taurus (Bovine).